Here is a 341-residue protein sequence, read N- to C-terminus: Keratin-associated protein 29-1 (341 aa).

Tandem repeats lie at residues 5–9 (CCPGN), 115–119 (CCQEK), 120–124 (CCDAS), 150–154 (CCDAG), 240–244 (CCVPS), 276–280 (CCKPA), and 307–311 (CCVTG). The segment at 5–311 (CCPGNTTAIP…GCKSACCVTG (307 aa)) is 7 X 5 AA repeats of C-C-X(3).

The protein belongs to the KRTAP type 10 family.

The chain is Keratin-associated protein 29-1 (KRTAP29-1) from Homo sapiens (Human).